A 211-amino-acid chain; its full sequence is FMN-dependent NADH:quinone oxidoreductase 2 (211 aa).

17–19 (SYS) contributes to the FMN binding site.

Belongs to the azoreductase type 1 family. As to quaternary structure, homodimer. It depends on FMN as a cofactor.

It catalyses the reaction 2 a quinone + NADH + H(+) = 2 a 1,4-benzosemiquinone + NAD(+). The catalysed reaction is N,N-dimethyl-1,4-phenylenediamine + anthranilate + 2 NAD(+) = 2-(4-dimethylaminophenyl)diazenylbenzoate + 2 NADH + 2 H(+). With respect to regulation, strongly inhibited by Pb(2+) and weakly inhibited by Cu(2+), Hg(2+) and Fe(2+). Stable in presence of Ag(+). In terms of biological role, quinone reductase that provides resistance to thiol-specific stress caused by electrophilic quinones. Contributes to resistance to 2-methylhydroquinone (2-MHQ) and catechol. Exhibits NADH-dependent 2,6-dichloroindophenol (DCIP) oxidoreductase activity. Also exhibits azoreductase activity. Catalyzes the reductive cleavage of the azo bond in aromatic azo compounds to the corresponding amines. Can reduce methyl red. This Bacillus subtilis (strain 168) protein is FMN-dependent NADH:quinone oxidoreductase 2.